A 73-amino-acid chain; its full sequence is UPF0346 protein Lreu_0775 (73 aa).

The protein belongs to the UPF0346 family.

This Limosilactobacillus reuteri (strain DSM 20016) (Lactobacillus reuteri) protein is UPF0346 protein Lreu_0775.